The chain runs to 230 residues: MNDLLTRRLLTMGAAAAMLAAVLLLTPITVPAGYPGAVAPATAACPDAEVVFARGRFEPPGIGTVGNAFVSALRSKVNKNVGVYAVKYPADNQIDVGANDMSAHIQSMANSCPNTRLVPGGYSLGAAVTDVVLAVPTQMWGFTNPLPPGSDEHIAAVALFGNGSQWVGPITNFSPAYNDRTIELCHGDDPVCHPADPNTWEANWPQHLAGAYVSSGMVNQAADFVAGKLQ.

Residues 1–32 (MNDLLTRRLLTMGAAAAMLAAVLLLTPITVPA) constitute a signal peptide (tat-type signal). Cys-45 and Cys-112 are disulfide-bonded. Residue Ser-123 is the Nucleophile of the active site. A disulfide bridge connects residues Cys-185 and Cys-192. Asp-189 is a catalytic residue. The Proton donor/acceptor role is filled by His-207.

Belongs to the cutinase family. Post-translationally, predicted to be exported by the Tat system. The position of the signal peptide cleavage has not been experimentally proven.

It localises to the secreted. The protein localises to the cell surface. This chain is Probable carboxylesterase Culp2 (cut2), found in Mycobacterium bovis (strain ATCC BAA-935 / AF2122/97).